Here is a 109-residue protein sequence, read N- to C-terminus: Trafficking protein particle complex subunit 2-like protein (109 aa).

It belongs to the TRAPP small subunits family. Sedlin subfamily. In terms of assembly, component of the multisubunit TRAPP (transport protein particle) complex, which includes at least TRAPPC2, TRAPPC2L, TRAPPC3, TRAPPC3L, TRAPPC4, TRAPPC5, TRAPPC8, TRAPPC9, TRAPPC10, TRAPPC11 and TRAPPC12. Interacts with the heterodimer TRAPPC3-TRAPPC6A.

It localises to the cytoplasm. The protein resides in the perinuclear region. Its subcellular location is the endoplasmic reticulum. It is found in the golgi apparatus. May play a role in vesicular transport from endoplasmic reticulum to Golgi. The protein is Trafficking protein particle complex subunit 2-like protein (TRAPPC2L) of Pongo abelii (Sumatran orangutan).